A 460-amino-acid chain; its full sequence is Putative RNA-guided DNA endonuclease MT2953 (460 aa).

Catalysis depends on residues Asp-224 and Glu-313. Cys-372, Cys-375, Cys-389, and Cys-392 together coordinate Zn(2+). Asp-399 is an active-site residue. Positions 415-460 (VVGPVGAAVKRGADRKTGPGPAGGREARKATGHPAGEQPRDGVQVK) are disordered.

This sequence in the N-terminal section; belongs to the transposase 2 family. It in the C-terminal section; belongs to the transposase 35 family.

An RNA-guided dsDNA endonuclease. When guided by an RNA derived from the right-end element of its insertion sequence element (IS), cleaves DNA downstream of the transposon-associated motif (TAM). Cleaves supercoiled and linear DNA in a staggered manner 15-21 bases from the TAM yielding 5'-overhangs. Binds reRNA, an approximately 150 nucleotide base sRNA derived from the 3' end of its own gene, the right end (RE) of the insertion sequence (IS) plus sequence downstream of the IS. The chain is Putative RNA-guided DNA endonuclease MT2953 from Mycobacterium tuberculosis (strain CDC 1551 / Oshkosh).